The sequence spans 196 residues: Thymidylate kinase (196 aa).

Position 7–14 (7–14 (GIDGSGKT)) interacts with ATP.

This sequence belongs to the thymidylate kinase family.

It catalyses the reaction dTMP + ATP = dTDP + ADP. Its function is as follows. Phosphorylation of dTMP to form dTDP in both de novo and salvage pathways of dTTP synthesis. The chain is Thymidylate kinase from Wolbachia pipientis wMel.